Consider the following 131-residue polypeptide: Small ribosomal subunit protein bS6 (131 aa).

The disordered stretch occupies residues 98-131 (EASPMVKAKDERRERRDDFANETADDAEAGDSEE). A compositionally biased stretch (basic and acidic residues) spans 104–116 (KAKDERRERRDDF). Residues 120–131 (TADDAEAGDSEE) show a composition bias toward acidic residues.

Belongs to the bacterial ribosomal protein bS6 family.

Binds together with bS18 to 16S ribosomal RNA. This chain is Small ribosomal subunit protein bS6, found in Cronobacter sakazakii (strain ATCC BAA-894) (Enterobacter sakazakii).